The following is a 116-amino-acid chain: Large ribosomal subunit protein uL18 (116 aa).

It belongs to the universal ribosomal protein uL18 family. As to quaternary structure, part of the 50S ribosomal subunit; part of the 5S rRNA/L5/L18/L25 subcomplex. Contacts the 5S and 23S rRNAs.

Functionally, this is one of the proteins that bind and probably mediate the attachment of the 5S RNA into the large ribosomal subunit, where it forms part of the central protuberance. This is Large ribosomal subunit protein uL18 from Acinetobacter baumannii (strain AB307-0294).